The chain runs to 93 residues: Small ribosomal subunit protein uS19 (93 aa).

The protein belongs to the universal ribosomal protein uS19 family.

Functionally, protein S19 forms a complex with S13 that binds strongly to the 16S ribosomal RNA. In Salinispora tropica (strain ATCC BAA-916 / DSM 44818 / JCM 13857 / NBRC 105044 / CNB-440), this protein is Small ribosomal subunit protein uS19.